The following is a 394-amino-acid chain: Exodeoxyribonuclease 7 large subunit (394 aa).

This sequence belongs to the XseA family. Heterooligomer composed of large and small subunits.

Its subcellular location is the cytoplasm. The catalysed reaction is Exonucleolytic cleavage in either 5'- to 3'- or 3'- to 5'-direction to yield nucleoside 5'-phosphates.. Its function is as follows. Bidirectionally degrades single-stranded DNA into large acid-insoluble oligonucleotides, which are then degraded further into small acid-soluble oligonucleotides. This is Exodeoxyribonuclease 7 large subunit from Thermotoga sp. (strain RQ2).